Here is a 635-residue protein sequence, read N- to C-terminus: MIDSTCYPRLSRIQTPEDLRAFQESELRAVADELRNYLIESVGLSGGHFAAGLGVVELTIALHYLYCTPIDQLVWDVGHQTYPHKILTGRRDKISTVKHQGGLAPFPKREESIYDTFGVGHSSTSISAALGMAIVAQRNGDERKVVAIIGDGAMTAGMAYEALNHAGGMSPAPNLLVILNDNRMSISEAVGGLTKMLGRATGSKALNAIREGGKRIFGDKKTNATARFLRRWEEHWKGMFVPSTLFEEMGFHYTGPIDGHDLPALLGALKTLRTLKGPQLLHVITTKGKGYELAEGDQIGYHAVAPFDPQKGLIKAGAKKQTYTDVFSEWLCDMAAVEPRLLAITPAMREGSGLVRFSQEYPQRYFDVAIAEQHAITLAAGMATQGAKPVVAIYSTFLQRGYDQLVHDVALQKLDVLFAVDRGGVVGPDGATHAGNLDLSFLRCVPNMMLMAPADEAECRKMLSTGFHYSGPVAVRYPRGTGPGVVPSAELDVLPVGVAQLRHSGTRIALLGFGVCVAPAEQVGRRLGLTVVNMRFIKPLDRTLLLELARTHEVFVTIEDNVVAGGAGSGVAELLNAEGIVLPIVHLGLPDAFQQHASREDLLAEAGIDAAGVYAALLSRWPDLAVQNHPLSAVS.

Thiamine diphosphate contacts are provided by residues His-79 and 120 to 122; that span reads GHS. A Mg(2+)-binding site is contributed by Asp-151. Thiamine diphosphate is bound by residues 152 to 153, Asn-182, Tyr-291, and Glu-372; that span reads GA. Asn-182 is a binding site for Mg(2+).

This sequence belongs to the transketolase family. DXPS subfamily. In terms of assembly, homodimer. It depends on Mg(2+) as a cofactor. Thiamine diphosphate is required as a cofactor.

The enzyme catalyses D-glyceraldehyde 3-phosphate + pyruvate + H(+) = 1-deoxy-D-xylulose 5-phosphate + CO2. It functions in the pathway metabolic intermediate biosynthesis; 1-deoxy-D-xylulose 5-phosphate biosynthesis; 1-deoxy-D-xylulose 5-phosphate from D-glyceraldehyde 3-phosphate and pyruvate: step 1/1. Its function is as follows. Catalyzes the acyloin condensation reaction between C atoms 2 and 3 of pyruvate and glyceraldehyde 3-phosphate to yield 1-deoxy-D-xylulose-5-phosphate (DXP). This is 1-deoxy-D-xylulose-5-phosphate synthase from Xylella fastidiosa (strain M12).